Reading from the N-terminus, the 313-residue chain is Ribosomal RNA small subunit methyltransferase H (313 aa).

S-adenosyl-L-methionine contacts are provided by residues 35–37 (GGH), aspartate 55, phenylalanine 79, aspartate 100, and glutamine 107.

This sequence belongs to the methyltransferase superfamily. RsmH family.

Its subcellular location is the cytoplasm. The enzyme catalyses cytidine(1402) in 16S rRNA + S-adenosyl-L-methionine = N(4)-methylcytidine(1402) in 16S rRNA + S-adenosyl-L-homocysteine + H(+). Its function is as follows. Specifically methylates the N4 position of cytidine in position 1402 (C1402) of 16S rRNA. This is Ribosomal RNA small subunit methyltransferase H from Burkholderia pseudomallei (strain 1106a).